Consider the following 231-residue polypeptide: Adenosylcobinamide-GDP ribazoletransferase (231 aa).

6 helical membrane passes run 29-49, 53-73, 101-121, 126-146, 167-187, and 211-231; these read ICAYFTFVGYLAGVFYFSMKL, NFLWTLLSVALGFYLFDLFHF, IGPFAFFYAALYIVAYLYAFL, IDLIYVAVLGRFSMNILLHFG, LISLVFTIPLVYFPLNYIISL, and DVLGATCMFSQLSIMVALSLI.

It belongs to the CobS family. The cofactor is Mg(2+).

Its subcellular location is the cell inner membrane. The enzyme catalyses alpha-ribazole + adenosylcob(III)inamide-GDP = adenosylcob(III)alamin + GMP + H(+). It catalyses the reaction alpha-ribazole 5'-phosphate + adenosylcob(III)inamide-GDP = adenosylcob(III)alamin 5'-phosphate + GMP + H(+). The protein operates within cofactor biosynthesis; adenosylcobalamin biosynthesis; adenosylcobalamin from cob(II)yrinate a,c-diamide: step 7/7. In terms of biological role, joins adenosylcobinamide-GDP and alpha-ribazole to generate adenosylcobalamin (Ado-cobalamin). Also synthesizes adenosylcobalamin 5'-phosphate from adenosylcobinamide-GDP and alpha-ribazole 5'-phosphate. The protein is Adenosylcobinamide-GDP ribazoletransferase of Kosmotoga olearia (strain ATCC BAA-1733 / DSM 21960 / TBF 19.5.1).